The primary structure comprises 370 residues: Probable dual-specificity RNA methyltransferase RlmN (370 aa).

Glu91 (proton acceptor) is an active-site residue. The 233-residue stretch at 97-329 (QHYGLSVCVT…KKNGVNCVVR (233 aa)) folds into the Radical SAM core domain. The cysteines at positions 104 and 340 are disulfide-linked. Residues Cys111, Cys115, and Cys118 each contribute to the [4Fe-4S] cluster site. Residues 163 to 164 (GE), Ser195, 218 to 220 (SLH), and Asn296 each bind S-adenosyl-L-methionine. Cys340 serves as the catalytic S-methylcysteine intermediate.

This sequence belongs to the radical SAM superfamily. RlmN family. [4Fe-4S] cluster is required as a cofactor.

It is found in the cytoplasm. It carries out the reaction adenosine(2503) in 23S rRNA + 2 reduced [2Fe-2S]-[ferredoxin] + 2 S-adenosyl-L-methionine = 2-methyladenosine(2503) in 23S rRNA + 5'-deoxyadenosine + L-methionine + 2 oxidized [2Fe-2S]-[ferredoxin] + S-adenosyl-L-homocysteine. The enzyme catalyses adenosine(37) in tRNA + 2 reduced [2Fe-2S]-[ferredoxin] + 2 S-adenosyl-L-methionine = 2-methyladenosine(37) in tRNA + 5'-deoxyadenosine + L-methionine + 2 oxidized [2Fe-2S]-[ferredoxin] + S-adenosyl-L-homocysteine. In terms of biological role, specifically methylates position 2 of adenine 2503 in 23S rRNA and position 2 of adenine 37 in tRNAs. The polypeptide is Probable dual-specificity RNA methyltransferase RlmN (Streptococcus suis (strain 98HAH33)).